The primary structure comprises 205 residues: 7-methyl-GTP pyrophosphatase (205 aa).

Aspartate 79 serves as the catalytic Proton acceptor.

This sequence belongs to the Maf family. YceF subfamily. A divalent metal cation serves as cofactor.

It localises to the cytoplasm. It catalyses the reaction N(7)-methyl-GTP + H2O = N(7)-methyl-GMP + diphosphate + H(+). Its function is as follows. Nucleoside triphosphate pyrophosphatase that hydrolyzes 7-methyl-GTP (m(7)GTP). May have a dual role in cell division arrest and in preventing the incorporation of modified nucleotides into cellular nucleic acids. This is 7-methyl-GTP pyrophosphatase from Paraburkholderia xenovorans (strain LB400).